The primary structure comprises 279 residues: Pleckstrin homology domain-containing family F member 1 (279 aa).

Residues 35 to 131 (VLLGEGVLTK…WISHIEECVR (97 aa)) enclose the PH domain. Residues 152–212 (DKATDICMRC…VCSLCYRELA (61 aa)) form an FYVE-type zinc finger. Zn(2+) is bound by residues C158, C161, C175, C178, C183, C186, C204, and C207. The segment at 218 to 264 (EEAEEQGAGSPGQPAHLARPICGASSGDDDDSDEDKEGSRDGDWPSS) is disordered. Residues 244 to 253 (GDDDDSDEDK) show a composition bias toward acidic residues.

As to expression, highly expressed in heart and skeletal muscle. Weakly expressed in brain, thymus, spleen, kidney, liver, small intestine, placenta and lung.

The protein localises to the nucleus. Its subcellular location is the cytoplasm. It is found in the perinuclear region. The protein resides in the lysosome. Functionally, may induce apoptosis through the lysosomal-mitochondrial pathway. Translocates to the lysosome initiating the permeabilization of lysosomal membrane (LMP) and resulting in the release of CTSD and CTSL to the cytoplasm. Triggers the caspase-independent apoptosis by altering mitochondrial membrane permeabilization (MMP) resulting in the release of PDCD8. The polypeptide is Pleckstrin homology domain-containing family F member 1 (PLEKHF1) (Homo sapiens (Human)).